A 245-amino-acid chain; its full sequence is MREALRSLLVALQFLTRLPVRLSAMPTPEQFGRAVLCYPLVGVLIGVVLYAAARSLDGTPPLLQAALLLSLWVALSGALHLDGLADMADAWVGGLGDRERTLAIMKDPRSGPVAVVVLVLVLLLKFSALAALLGQGEAGLLPLAPWLARSSLPLLFLTTPYARPGGLGQAIAEHLPARSLPWVLGVSFGLALAFGLAGLLALLVTLMLFAWLRSRFLARLGGTTGDTAGALVELTECAVLVALAL.

5 helical membrane passes run 31–51 (FGRAVLCYPLVGVLIGVVLYA), 61–81 (PLLQAALLLSLWVALSGALHL), 113–133 (VAVVVLVLVLLLKFSALAALL), 138–158 (AGLLPLAPWLARSSLPLLFLT), and 192–212 (LAFGLAGLLALLVTLMLFAWL).

It belongs to the CobS family. Requires Mg(2+) as cofactor.

The protein resides in the cell inner membrane. It carries out the reaction alpha-ribazole + adenosylcob(III)inamide-GDP = adenosylcob(III)alamin + GMP + H(+). It catalyses the reaction alpha-ribazole 5'-phosphate + adenosylcob(III)inamide-GDP = adenosylcob(III)alamin 5'-phosphate + GMP + H(+). It functions in the pathway cofactor biosynthesis; adenosylcobalamin biosynthesis; adenosylcobalamin from cob(II)yrinate a,c-diamide: step 7/7. Functionally, joins adenosylcobinamide-GDP and alpha-ribazole to generate adenosylcobalamin (Ado-cobalamin). Also synthesizes adenosylcobalamin 5'-phosphate from adenosylcobinamide-GDP and alpha-ribazole 5'-phosphate. This Pseudomonas aeruginosa (strain ATCC 15692 / DSM 22644 / CIP 104116 / JCM 14847 / LMG 12228 / 1C / PRS 101 / PAO1) protein is Adenosylcobinamide-GDP ribazoletransferase.